Reading from the N-terminus, the 528-residue chain is MASFVDRVVLHVSGGTGGHGCVSVKREKFKPLGGPDGGNGGNGGDVILRVSAQTTTLLDYHHAPHRHATNGGPGMGDWRGGKNGETLILPVPDGTVVKTKDGEVLADLVGEGTEYIAAAGGQGGLGNASLSSQKRRAPGFALLGIEGESSDIVLELKSIADIALVGFPSAGKSSLIAAMSAARPKIADYPFTTLIPNLGVVQAGDVRFTIADVPGLIEGASEGKGLGHNFLRHVERCAALVHVLDCGTLESDRDPLSDLAIIEAELEKYAVDMSYAGVDGEVVPLNERPKLVVLNKVDLPDGKDMAEFVRPDLEARGYRVFEVSATSHEGLRQLGFAMAEIVQAARNAVQAAPPKVAPPVLRPRAVNESGFKIRREEKNLEPLFRVLGEKPVRWVKQTDFTNEEAIGYLADRLAKLGVETELFKVGAKPGDTVVIGEDDGVVFDWEPTMMAGAELLATPRGTDIRVADIGDRPTRSQKRDEQIERREAKAAARAELEAERKAGIWTESVSGRRAQAVKESHLDSGDDD.

In terms of domain architecture, Obg spans 2-159 (ASFVDRVVLH…SDIVLELKSI (158 aa)). Residues 160-343 (ADIALVGFPS…LGFAMAEIVQ (184 aa)) enclose the OBG-type G domain. Residues 166 to 173 (GFPSAGKS), 191 to 195 (FTTLI), 212 to 215 (DVPG), 295 to 298 (NKVD), and 324 to 326 (SAT) contribute to the GTP site. The Mg(2+) site is built by Ser173 and Thr193. Residues 363 to 447 (PRAVNESGFK…DDGVVFDWEP (85 aa)) form the OCT domain. Positions 471–490 (DRPTRSQKRDEQIERREAKA) are disordered.

Belongs to the TRAFAC class OBG-HflX-like GTPase superfamily. OBG GTPase family. Monomer. Mg(2+) serves as cofactor.

The protein resides in the cytoplasm. An essential GTPase which binds GTP, GDP and possibly (p)ppGpp with moderate affinity, with high nucleotide exchange rates and a fairly low GTP hydrolysis rate. Plays a role in control of the cell cycle, stress response, ribosome biogenesis and in those bacteria that undergo differentiation, in morphogenesis control. This is GTPase Obg from Paenarthrobacter aurescens (strain TC1).